The sequence spans 498 residues: Transcription factor kayak (498 aa).

Residues 108 to 127 are compositionally biased toward polar residues; sequence ASLGQGSESEDSNASYNDTQ. Disordered regions lie at residues 108–144 and 177–234; these read ASLG…HTDS and GSAS…KRRV. Low complexity-rich tracts occupy residues 135 to 144 and 177 to 191; these read TDTSSAHTDS and GSAS…TSNT. In terms of domain architecture, bZIP spans 212-275; it reads EQKRAVRRER…KQLEYLLATH (64 aa). Residues 214 to 233 form a basic motif region; that stretch reads KRAVRRERNKQAAARCRKRR. The tract at residues 240–247 is leucine-zipper; it reads LTEEVEQL. A compositionally biased stretch (low complexity) spans 304–325; sequence AGSSGSGASSHHNHNSNDSSNG. Disordered stretches follow at residues 304–345 and 465–498; these read AGSS…SPLD and TPVS…LVSL. The span at 333-343 shows a compositional bias: polar residues; sequence TLNSTGRSNSP. Ser342 carries the phosphoserine modification.

The protein belongs to the bZIP family. Fos subfamily. Homodimer. Heterodimer with Jra. The kay-Jra heterodimer binds more stably to the AP-1 site than either of the two proteins alone.

The protein localises to the nucleus. Developmentally regulated transcription factor AP-1 binds and recognizes the enhancer DNA sequence: 5'-TGA[CG]TCA-3'. May play a role in the function or determination of a particular subset of cells in the developing embryo. It is able to carry out its function either independently of or in conjunction with Jra. This is Transcription factor kayak from Drosophila simulans (Fruit fly).